The chain runs to 335 residues: Fructokinase-2 (335 aa).

Belongs to the carbohydrate kinase PfkB family. As to expression, expressed in roots, at higher levels in stems, and hardly detectable in leaves.

The catalysed reaction is D-fructose + ATP = D-fructose 6-phosphate + ADP + H(+). Its pathway is glycan biosynthesis; starch biosynthesis. Its activity is regulated as follows. Inhibited at high fructose. Functionally, may play an important role in maintaining the flux of carbon towards starch formation. May also be involved in a sugar-sensing pathway. This is Fructokinase-2 (FRK2) from Zea mays (Maize).